The following is a 74-amino-acid chain: Protein A30 homolog (74 aa).

This sequence belongs to the chordopoxvirinae A30 family. As to quaternary structure, interacts with protein G7; the interaction stabilizes both proteins. In terms of processing, phosphorylated by viral F10 kinase.

In terms of biological role, required for the association between the dense viroplasm and the viral membranes to form the mature virion (MV). This chain is Protein A30 homolog, found in Fowlpox virus (strain NVSL) (FPV).